Here is a 172-residue protein sequence, read N- to C-terminus: Dehydratase cfoI (172 aa).

Active-site residues include H86 and H111.

Belongs to the scytalone dehydratase family. Homotrimer. Each subunit contains an active site, located in the central part of the hydrophobic core of the monomer, which functions independently.

The protein operates within secondary metabolite biosynthesis; flavonoid biosynthesis. In terms of biological role, cytochrome P450 monooxygenase; part of the gene cluster that mediates the biosynthesis of chlorflavonin, a fungal flavonoid with acetolactate synthase inhibitory activity. Within the pathway, cfoI is responsible for the hydroxylation of the flavonoid skeleton at position C3 with cfoF. The pathway begins with the PKS-NRPS hybrid synthetase cfoA that uses benzoic acid or p-hydroxybenzoic acid as a starter unit with four rounds of chain elongation using malonyl-CoA to form the chalcone skeleton. Then, a new type of chalcone isomerase, cfoK, catalyzes the conversion of the chalcone into a flavanone by a histidine-mediated oxa-Michael addition mechanism. The desaturation of flavanone to flavone is catalyzed by a new type of flavone synthase, the flavin mononucleotide (FMN)-dependent oxidoreductase cfoJ. Monooxygenases cfoF, cfoG, and P450 cfoH are responsible for the hydroxylation of the flavonoid skeleton at sites C3, C8, and C2', respectively. Like cfoF, the dehydratase cfoI plays also a role in the hydroxylation of position C3. Methyltransferases cfoB, cfoC, and cfoD then catalyze the methylation of C7-OH, C8-OH, and C3-OH, respectively. Finally, the monooxygenase cfoE is responsible for the chlorination of flavonoid at position C3'. The protein is Dehydratase cfoI of Aspergillus candidus.